Here is a 167-residue protein sequence, read N- to C-terminus: uncharacterized protein (167 aa).

An N-terminal signal peptide occupies residues 1-25 (MPFSVTKFSLIFVALLLAEALVAQS).

This is an uncharacterized protein from Caenorhabditis elegans.